We begin with the raw amino-acid sequence, 128 residues long: Glycine cleavage system H protein (128 aa).

Residues 23–105 enclose the Lipoyl-binding domain; the sequence is VATVGISDHA…YEGGWLFKVQ (83 aa). K64 is modified (N6-lipoyllysine).

This sequence belongs to the GcvH family. In terms of assembly, the glycine cleavage system is composed of four proteins: P, T, L and H. The cofactor is (R)-lipoate.

The glycine cleavage system catalyzes the degradation of glycine. The H protein shuttles the methylamine group of glycine from the P protein to the T protein. The sequence is that of Glycine cleavage system H protein from Alcanivorax borkumensis (strain ATCC 700651 / DSM 11573 / NCIMB 13689 / SK2).